A 317-amino-acid polypeptide reads, in one-letter code: Porphobilinogen deaminase (317 aa).

The residue at position 245 (Cys245) is an S-(dipyrrolylmethanemethyl)cysteine.

The protein belongs to the HMBS family. As to quaternary structure, monomer. Dipyrromethane serves as cofactor.

The enzyme catalyses 4 porphobilinogen + H2O = hydroxymethylbilane + 4 NH4(+). The protein operates within porphyrin-containing compound metabolism; protoporphyrin-IX biosynthesis; coproporphyrinogen-III from 5-aminolevulinate: step 2/4. Its pathway is porphyrin-containing compound metabolism; chlorophyll biosynthesis. In terms of biological role, tetrapolymerization of the monopyrrole PBG into the hydroxymethylbilane pre-uroporphyrinogen in several discrete steps. The chain is Porphobilinogen deaminase from Parasynechococcus marenigrum (strain WH8102).